The sequence spans 215 residues: Cytidylate kinase (215 aa).

Position 11-19 (11-19 (GPTASGKGT)) interacts with ATP.

This sequence belongs to the cytidylate kinase family. Type 1 subfamily.

The protein resides in the cytoplasm. The enzyme catalyses CMP + ATP = CDP + ADP. It catalyses the reaction dCMP + ATP = dCDP + ADP. This chain is Cytidylate kinase, found in Polynucleobacter necessarius subsp. necessarius (strain STIR1).